The sequence spans 322 residues: tRNA U34 carboxymethyltransferase (322 aa).

7 residues coordinate carboxy-S-adenosyl-L-methionine: lysine 91, tryptophan 105, lysine 110, glycine 129, methionine 195, tyrosine 199, and arginine 314.

Belongs to the class I-like SAM-binding methyltransferase superfamily. CmoB family. In terms of assembly, homotetramer.

It catalyses the reaction carboxy-S-adenosyl-L-methionine + 5-hydroxyuridine(34) in tRNA = 5-carboxymethoxyuridine(34) in tRNA + S-adenosyl-L-homocysteine + H(+). Its function is as follows. Catalyzes carboxymethyl transfer from carboxy-S-adenosyl-L-methionine (Cx-SAM) to 5-hydroxyuridine (ho5U) to form 5-carboxymethoxyuridine (cmo5U) at position 34 in tRNAs. In Ectopseudomonas mendocina (strain ymp) (Pseudomonas mendocina), this protein is tRNA U34 carboxymethyltransferase.